The following is a 595-amino-acid chain: GRB2-associated-binding protein 3 (595 aa).

Residues 5 to 117 (DTVCMGWLIK…WVHSISQVCN (113 aa)) form the PH domain. The tract at residues 295 to 339 (SGVKELNIMSNTPPPRPPKPSYLSEQRQDQPLLTGHSSNKKPGYT) is disordered. The span at 317–331 (LSEQRQDQPLLTGHS) shows a compositional bias: polar residues. Phosphoserine is present on S346. 2 disordered regions span residues 389–408 (PSAE…SELR) and 418–463 (PMSS…QEHT). Residues 454-463 (RNLSTIQEHT) are compositionally biased toward polar residues. A Phosphoserine modification is found at S480. A disordered region spans residues 493 to 513 (STPSEEEEEEEEEEEEEEEEE). The span at 496-513 (SEEEEEEEEEEEEEEEEE) shows a compositional bias: acidic residues.

This sequence belongs to the GAB family. Interacts with PIK3R/p85, SHP2 and GRAP2/MONA. May interact with Grb2. In terms of processing, phosphorylated on tyrosine residue(s) after macrophage colony-stimulating factor (M-CSF) receptor stimulation. Highly expressed in spleen and thymus and weakly in brain, heart, lung, kidney, uterus, and embryonic stem cells. Also expressed in myeloid and macrophage cell lines.

The polypeptide is GRB2-associated-binding protein 3 (Gab3) (Mus musculus (Mouse)).